A 298-amino-acid chain; its full sequence is UDP-N-acetylenolpyruvoylglucosamine reductase (298 aa).

The 166-residue stretch at 26–191 (KTGGEAEYLA…LSATFSLTPG (166 aa)) folds into the FAD-binding PCMH-type domain. Arg-170 is a catalytic residue. Ser-220 serves as the catalytic Proton donor. Glu-290 is an active-site residue.

This sequence belongs to the MurB family. FAD is required as a cofactor.

The protein localises to the cytoplasm. It carries out the reaction UDP-N-acetyl-alpha-D-muramate + NADP(+) = UDP-N-acetyl-3-O-(1-carboxyvinyl)-alpha-D-glucosamine + NADPH + H(+). Its pathway is cell wall biogenesis; peptidoglycan biosynthesis. Its function is as follows. Cell wall formation. This is UDP-N-acetylenolpyruvoylglucosamine reductase from Lactobacillus helveticus (strain DPC 4571).